A 264-amino-acid polypeptide reads, in one-letter code: ATP synthase subunit b 1 (264 aa).

The chain crosses the membrane as a helical span at residues 2 to 22 (LFDWFTFWAQLLNFLILVWLL). Positions 240–264 (ASSALLDGPDDEMNEEEGHAGKDAD) are disordered. The segment covering 255–264 (EEGHAGKDAD) has biased composition (basic and acidic residues).

Belongs to the ATPase B chain family. In terms of assembly, F-type ATPases have 2 components, F(1) - the catalytic core - and F(0) - the membrane proton channel. F(1) has five subunits: alpha(3), beta(3), gamma(1), delta(1), epsilon(1). F(0) has four main subunits: a(1), b(2) and c(10-14). The alpha and beta chains form an alternating ring which encloses part of the gamma chain. F(1) is attached to F(0) by a central stalk formed by the gamma and epsilon chains, while a peripheral stalk is formed by the delta and b chains.

It is found in the cell inner membrane. F(1)F(0) ATP synthase produces ATP from ADP in the presence of a proton or sodium gradient. F-type ATPases consist of two structural domains, F(1) containing the extramembraneous catalytic core and F(0) containing the membrane proton channel, linked together by a central stalk and a peripheral stalk. During catalysis, ATP synthesis in the catalytic domain of F(1) is coupled via a rotary mechanism of the central stalk subunits to proton translocation. In terms of biological role, component of the F(0) channel, it forms part of the peripheral stalk, linking F(1) to F(0). The sequence is that of ATP synthase subunit b 1 from Chlorobium luteolum (strain DSM 273 / BCRC 81028 / 2530) (Pelodictyon luteolum).